A 197-amino-acid chain; its full sequence is Imidazoleglycerol-phosphate dehydratase (197 aa).

Belongs to the imidazoleglycerol-phosphate dehydratase family.

Its subcellular location is the cytoplasm. The enzyme catalyses D-erythro-1-(imidazol-4-yl)glycerol 3-phosphate = 3-(imidazol-4-yl)-2-oxopropyl phosphate + H2O. It participates in amino-acid biosynthesis; L-histidine biosynthesis; L-histidine from 5-phospho-alpha-D-ribose 1-diphosphate: step 6/9. The polypeptide is Imidazoleglycerol-phosphate dehydratase (Cellvibrio japonicus (strain Ueda107) (Pseudomonas fluorescens subsp. cellulosa)).